An 82-amino-acid polypeptide reads, in one-letter code: Small ribosomal subunit protein bS20 (82 aa).

The protein belongs to the bacterial ribosomal protein bS20 family.

Functionally, binds directly to 16S ribosomal RNA. The sequence is that of Small ribosomal subunit protein bS20 from Streptococcus suis (strain 98HAH33).